A 160-amino-acid chain; its full sequence is D-aminoacyl-tRNA deacylase (160 aa).

Positions 137-138 (GP) match the Gly-cisPro motif, important for rejection of L-amino acids motif.

This sequence belongs to the DTD family. Homodimer.

It is found in the cytoplasm. It catalyses the reaction glycyl-tRNA(Ala) + H2O = tRNA(Ala) + glycine + H(+). It carries out the reaction a D-aminoacyl-tRNA + H2O = a tRNA + a D-alpha-amino acid + H(+). Its function is as follows. An aminoacyl-tRNA editing enzyme that deacylates mischarged D-aminoacyl-tRNAs. Also deacylates mischarged glycyl-tRNA(Ala), protecting cells against glycine mischarging by AlaRS. Acts via tRNA-based rather than protein-based catalysis; rejects L-amino acids rather than detecting D-amino acids in the active site. By recycling D-aminoacyl-tRNA to D-amino acids and free tRNA molecules, this enzyme counteracts the toxicity associated with the formation of D-aminoacyl-tRNA entities in vivo and helps enforce protein L-homochirality. This chain is D-aminoacyl-tRNA deacylase, found in Chloroflexus aurantiacus (strain ATCC 29364 / DSM 637 / Y-400-fl).